A 457-amino-acid polypeptide reads, in one-letter code: uncharacterized protein (457 aa).

Positions 5–63 constitute a TRAM domain; that stretch reads PVKKNDVIEVEIIDLTHEGLGVAKVDHYPLFIENALPGEKLEIKVLKTGKSFGYGKVLT. Residues Gln-287, Tyr-316, Glu-337, and Asp-385 each contribute to the S-adenosyl-L-methionine site. The Nucleophile role is filled by Cys-412.

Belongs to the class I-like SAM-binding methyltransferase superfamily. RNA M5U methyltransferase family.

This is an uncharacterized protein from Enterococcus faecalis (strain ATCC 700802 / V583).